The primary structure comprises 1014 residues: Poly [ADP-ribose] polymerase 1 (1014 aa).

At A2 the chain carries N-acetylalanine. Residues 9–93 form a PARP-type 1 zinc finger; it reads YRVEYAKSGR…KVKKTAEAGG (85 aa). The Zn(2+) site is built by C21 and C24. Residue S41 is modified to Phosphoserine. Zn(2+) is bound by residues H53 and C56. Residues K97 and K105 each carry the N6-acetyllysine modification. Residues 113-203 form a PARP-type 2 zinc finger; it reads FAAEYAKSNR…ALKKQLPGVK (91 aa). C125 and C128 together coordinate Zn(2+). K131 is modified (N6-acetyllysine). Residues H159 and C162 each contribute to the Zn(2+) site. Residues S177, S179, and S185 each carry the phosphoserine modification. A Glycyl lysine isopeptide (Lys-Gly) (interchain with G-Cter in SUMO2) cross-link involves residue K192. The interval 198–233 is disordered; sequence QLPGVKSEGKRKGDEVDGVDEVAKKKSKKEKDKDSK. K203 participates in a covalent cross-link: Glycyl lysine isopeptide (Lys-Gly) (interchain with G-Cter in SUMO1); alternate. Residue K203 forms a Glycyl lysine isopeptide (Lys-Gly) (interchain with G-Cter in SUMO2); alternate linkage. Residues 204-233 are compositionally biased toward basic and acidic residues; it reads SEGKRKGDEVDGVDEVAKKKSKKEKDKDSK. 2 short sequence motifs (nuclear localization signal) span residues 207 to 209 and 221 to 226; these read KRK and KKKSKK. The PADR1 zinc-binding domain maps to 225 to 359; it reads KKEKDKDSKL…VKKQDRIFPP (135 aa). A Glycyl lysine isopeptide (Lys-Gly) (interchain with G-Cter in SUMO2) cross-link involves residue K249. A phosphoserine mark is found at S274 and S277. Residues 290 to 332 are zinc ribbon; sequence GALLPCEECSGQLVFKSDAYYCTGDVTAWTKCMVKTQTPNRKE. 4 residues coordinate Zn(2+): C295, C298, C311, and C321. A disordered region spans residues 361–385; it reads TSASVAATPPPSTASAPAAVNSSAS. S364 is modified (phosphoserine). T368 is modified (phosphothreonine). An automodification domain region spans residues 373–524; sequence TASAPAAVNS…GINKSEKRMK (152 aa). In terms of domain architecture, BRCT spans 385–476; it reads SADKPLSNMK…KSLQELFLAH (92 aa). Residue D387 is modified to PolyADP-ribosyl aspartic acid. PolyADP-ribosyl glutamic acid occurs at positions 407, 413, 435, 437, 444, 445, 448, and 456. Residue K467 forms a Glycyl lysine isopeptide (Lys-Gly) (interchain with G-Cter in SUMO2) linkage. Residues E471 and E484 each carry the polyADP-ribosyl glutamic acid modification. K486 participates in a covalent cross-link: Glycyl lysine isopeptide (Lys-Gly) (interchain with G-Cter in SUMO1); alternate. K486 participates in a covalent cross-link: Glycyl lysine isopeptide (Lys-Gly) (interchain with G-Cter in SUMO2); alternate. Residues E488 and E491 each carry the polyADP-ribosyl glutamic acid modification. An ADP-ribosylserine mark is found at S499, S504, and S507. K512 is covalently cross-linked (Glycyl lysine isopeptide (Lys-Gly) (interchain with G-Cter in SUMO2)). 2 positions are modified to polyADP-ribosyl glutamic acid: E513 and E514. An ADP-ribosylserine modification is found at S519. E520 bears the PolyADP-ribosyl glutamic acid mark. K521 is modified (N6-(ADP-ribosyl)lysine). K528 is covalently cross-linked (Glycyl lysine isopeptide (Lys-Gly) (interchain with G-Cter in SUMO2)). The region spanning 542–638 is the WGR domain; the sequence is SAHVLEKGGK…KNFTKYPKKF (97 aa). Phosphothreonine; by PRKDC is present on T594. K600 and K621 each carry N6-acetyllysine. Positions 662-779 constitute a PARP alpha-helical domain; the sequence is KSKLPKPVQD…DIEVAYSLLR (118 aa). A Glycyl lysine isopeptide (Lys-Gly) (interchain with G-Cter in SUMO1); alternate cross-link involves residue K748. A Glycyl lysine isopeptide (Lys-Gly) (interchain with G-Cter in SUMO2); alternate cross-link involves residue K748. S782 and S786 each carry phosphoserine. Positions 788-1014 constitute a PARP catalytic domain; sequence DPIDVNYEKL…LKFNFKTSLW (227 aa). NAD(+) contacts are provided by residues 862–864, G871, R878, and S904; that span reads HGS. E988 (for poly [ADP-ribose] polymerase activity) is an active-site residue.

The protein belongs to the ARTD/PARP family. In terms of assembly, homodimer; PARP-type zinc-fingers from separate PARP1 molecules form a dimer module that specifically recognizes DNA strand breaks. Heterodimer; heterodimerizes with PARP2. Interacts (via the PARP catalytic domain) with HPF1. Interacts with NMNAT1. Interacts with nucleosomes; with a preference for nucleosomes containing H2A.X. Interacts with APTX. Component of a base excision repair (BER) complex, containing at least XRCC1, PARP1, PARP2, POLB and LRIG3. Interacts with SRY. The SWAP complex consists of NPM1, NCL, PARP1 and SWAP70. Interacts with TIAM2. Interacts with PARP3; leading to activate PARP1 in absence of DNA. Interacts (when poly-ADP-ribosylated) with CHD1L (via macro domain). Interacts with the DNA polymerase alpha catalytic subunit POLA1; this interaction functions as part of the control of replication fork progression. Interacts with EEF1A1 and TXK. Interacts with RNF4. Interacts with RNF146. Interacts with ZNF423. Interacts with APLF. Interacts with SNAI1 (via zinc fingers); the interaction requires SNAI1 to be poly-ADP-ribosylated and non-phosphorylated (active) by GSK3B. Interacts (when poly-ADP-ribosylated) with PARP9. Interacts with NR4A3; activates PARP1 by improving acetylation of PARP1 and suppressing the interaction between PARP1 and SIRT1. Interacts (via catalytic domain) with PUM3; the interaction inhibits the poly-ADP-ribosylation activity of PARP1 and the degradation of PARP1 by CASP3 following genotoxic stress. Interacts with ZNF365. Interacts with RRP1B. Interacts with TIMELESS; the interaction is direct. Interacts with CGAS; leading to impede the formation of the PARP1-TIMELESS complex. Interacts with KHDC3L, the interaction is increased following the formation of DNA double-strand breaks. Interacts (when auto-poly-ADP-ribosylated) with XRCC1; leading to inhibit PARP1 ADP-ribosyltransferase activity. Interacts with SPINDOC; promoting PARP1 ADP-ribosyltransferase activity. Interacts with BANF1; leading to inhibit PARP1 ADP-ribosyltransferase activity in response to oxidative DNA damage. Interacts (when sumoylated and ubiquitinated) with VCP/p97; leading to its extraction from chromatin. Interacts with YARS1; Interacts with PACMP micropeptide; interaction. Interacts with PACMP micropeptide; Interacts with PACMP micropeptide; interaction. Interacts (when poly-ADP-ribosylated) with isoform 1 of MACROH2A1; MACROH2A1 specifically binds to poly-ADP-ribose chains and inhibits PARP1 activity, limiting the consumption of nuclear NAD(+). Interacts with CARM1; promoting recruitment to replication forks. Interacts with RECQL. Interacts with ZNF32; the interaction reshapes ZNF432 interacting proteins. Interacts with TPRN; TPRN interacts with a number of DNA damage response proteins, is recruited to sites of DNA damage and may play a role in DNA damage repair. As to quaternary structure, interacts (when auto-poly-ADP-ribosylated) with AIFM1. (Microbial infection) Interacts with human herpesvirus 8 (KSHV) protein RTA/ORF50; this interaction negatively regulates RTA/ORF50 transactivation activity. Poly-ADP-ribosylated on serine, glutamate and aspartate residues by autocatalysis. Auto-ADP-ribosylation on serine takes place following interaction with HPF1. Auto poly-ADP-ribosylation on serine residues promotes its dissociation from chromatin. Poly-ADP-ribosylated by PARP2; poly-ADP-ribosylation mediates the recruitment of CHD1L to DNA damage sites. Mono-ADP-ribosylated at Lys-521 by SIRT6 in response to oxidative stress, promoting recruitment to double-strand breaks (DSBs) sites. In terms of processing, phosphorylated at Thr-594 by PRKDC in response to DNA damage following virus infection, promoting its translocation to the cytosol. Phosphorylated by TXK. Post-translationally, S-nitrosylated, leading to inhibit transcription regulation activity. Proteolytically cleaved by caspase-3 (CASP3) and caspase-7 (CASP7) in response to apoptosis to generate the Poly [ADP-ribose] polymerase 1, processed N-terminus and Poly [ADP-ribose] polymerase 1, processed C-terminus forms. CASP3-mediated cleavage is promoted by the TP53/p53-induced long non-coding RNA SPARCLE, which binds PARP1 in response to genotoxic stress. In terms of processing, sumoylated with SUMO1 or SUMO2 by PIAS4 following prolonged residence (trapping) to chromatin. Sumoylation promotes ubiquitination by RNF4 and removal from chromatin by VCP/p97. Post-translationally, ubiquitinated by RNF4 following sumoylation by PIAS4 in response to prolonged residence (trapping) to chromatin. Ubiquitination promotes removal from chromatin by VCP/p97.

Its subcellular location is the chromosome. It is found in the nucleus. It localises to the nucleolus. The protein resides in the cytoplasm. The protein localises to the cytosol. The catalysed reaction is NAD(+) + (ADP-D-ribosyl)n-acceptor = nicotinamide + (ADP-D-ribosyl)n+1-acceptor + H(+).. The enzyme catalyses L-seryl-[protein] + NAD(+) = O-(ADP-D-ribosyl)-L-seryl-[protein] + nicotinamide + H(+). It catalyses the reaction L-aspartyl-[protein] + NAD(+) = 4-O-(ADP-D-ribosyl)-L-aspartyl-[protein] + nicotinamide. It carries out the reaction L-glutamyl-[protein] + NAD(+) = 5-O-(ADP-D-ribosyl)-L-glutamyl-[protein] + nicotinamide. The catalysed reaction is L-tyrosyl-[protein] + NAD(+) = O-(ADP-D-ribosyl)-L-tyrosyl-[protein] + nicotinamide + H(+). The enzyme catalyses L-histidyl-[protein] + NAD(+) = N(tele)-(ADP-D-ribosyl)-L-histidyl-[protein] + nicotinamide + H(+). Its activity is regulated as follows. ADP-ribosyltransferase activity is regulated via an allosteric activation mechanism. In absence of activation signal, PARP1 is autoinhibited by the PARP alpha-helical domain (also named HD region), which prevents effective NAD(+)-binding. Activity is highly stimulated by signals, such as DNA strand breaks. Binding to damaged DNA unfolds the PARP alpha-helical domain, relieving autoinhibition. Poly-ADP-ribosyltransferase activity is tightly regulated and PARP1 is removed from damaged chromatin following initial poly-ADP-ribosylation of chromatin to avoid prolonged residence (trapping) that has cytotoxic consequences. A number of factors (VCP/p97) or post-translational modifications (auto-poly-ADP-ribosylation or ubiquitination) promote PARP1 removal from chromatin. ADP-ribosyltransferase activity is inhibited by a number of PARP inhibitors (PARPi) compounds, that are used the treatment of breast or ovarian cancers that have defects in DNA repair by homologous recombination. PARPi molecules can be classified in three categories: type I compounds (EB-47, UKTT15 and BAD) that promote allosteric retention of PARP1 on DNA, type II inhibitors (talazoparib and olaparib) that mediate a non-allosteric inhibition, and type III inhibitors (rucaparib, niraparib, and veliparib) that promote allosteric release from DNA. Trapping to chromatin by PARPi molecules triggers activation of the cGAS-STING pathway. Its function is as follows. Poly-ADP-ribosyltransferase that mediates poly-ADP-ribosylation of proteins and plays a key role in DNA repair. Mediates glutamate, aspartate, serine, histidine or tyrosine ADP-ribosylation of proteins: the ADP-D-ribosyl group of NAD(+) is transferred to the acceptor carboxyl group of target residues and further ADP-ribosyl groups are transferred to the 2'-position of the terminal adenosine moiety, building up a polymer with an average chain length of 20-30 units. Serine ADP-ribosylation of proteins constitutes the primary form of ADP-ribosylation of proteins in response to DNA damage. Specificity for the different amino acids is conferred by interacting factors, such as HPF1 and NMNAT1. Following interaction with HPF1, catalyzes serine ADP-ribosylation of target proteins; HPF1 confers serine specificity by completing the PARP1 active site. Also catalyzes tyrosine ADP-ribosylation of target proteins following interaction with HPF1. Following interaction with NMNAT1, catalyzes glutamate and aspartate ADP-ribosylation of target proteins; NMNAT1 confers glutamate and aspartate specificity. PARP1 initiates the repair of DNA breaks: recognizes and binds DNA breaks within chromatin and recruits HPF1, licensing serine ADP-ribosylation of target proteins, such as histones (H2BS6ADPr and H3S10ADPr), thereby promoting decompaction of chromatin and the recruitment of repair factors leading to the reparation of DNA strand breaks. HPF1 initiates serine ADP-ribosylation but restricts the polymerase activity of PARP1 in order to limit the length of poly-ADP-ribose chains. In addition to base excision repair (BER) pathway, also involved in double-strand breaks (DSBs) repair: together with TIMELESS, accumulates at DNA damage sites and promotes homologous recombination repair by mediating poly-ADP-ribosylation. Mediates the poly-ADP-ribosylation of a number of proteins, including itself, APLF, CHFR, RPA1 and NFAT5. In addition to proteins, also able to ADP-ribosylate DNA: catalyzes ADP-ribosylation of DNA strand break termini containing terminal phosphates and a 2'-OH group in single- and double-stranded DNA, respectively. Required for PARP9 and DTX3L recruitment to DNA damage sites. PARP1-dependent PARP9-DTX3L-mediated ubiquitination promotes the rapid and specific recruitment of 53BP1/TP53BP1, UIMC1/RAP80, and BRCA1 to DNA damage sites. PARP1-mediated DNA repair in neurons plays a role in sleep: senses DNA damage in neurons and promotes sleep, facilitating efficient DNA repair. In addition to DNA repair, also involved in other processes, such as transcription regulation, programmed cell death, membrane repair, adipogenesis and innate immunity. Acts as a repressor of transcription: binds to nucleosomes and modulates chromatin structure in a manner similar to histone H1, thereby altering RNA polymerase II. Acts both as a positive and negative regulator of transcription elongation, depending on the context. Acts as a positive regulator of transcription elongation by mediating poly-ADP-ribosylation of NELFE, preventing RNA-binding activity of NELFE and relieving transcription pausing. Acts as a negative regulator of transcription elongation in response to DNA damage by catalyzing poly-ADP-ribosylation of CCNT1, disrupting the phase separation activity of CCNT1 and subsequent activation of CDK9. Involved in replication fork progression following interaction with CARM1: mediates poly-ADP-ribosylation at replication forks, slowing fork progression. Poly-ADP-ribose chains generated by PARP1 also play a role in poly-ADP-ribose-dependent cell death, a process named parthanatos. Also acts as a negative regulator of the cGAS-STING pathway. Acts by mediating poly-ADP-ribosylation of CGAS: PARP1 translocates into the cytosol following phosphorylation by PRKDC and catalyzes poly-ADP-ribosylation and inactivation of CGAS. Acts as a negative regulator of adipogenesis: catalyzes poly-ADP-ribosylation of histone H2B on 'Glu-35' (H2BE35ADPr) following interaction with NMNAT1, inhibiting phosphorylation of H2B at 'Ser-36' (H2BS36ph), thereby blocking expression of pro-adipogenetic genes. Involved in the synthesis of ATP in the nucleus, together with NMNAT1, PARG and NUDT5. Nuclear ATP generation is required for extensive chromatin remodeling events that are energy-consuming. Promotes AIFM1-mediated apoptosis. This form, which translocates into the cytoplasm following cleavage by caspase-3 (CASP3) and caspase-7 (CASP7) in response to apoptosis, is auto-poly-ADP-ribosylated and serves as a poly-ADP-ribose carrier to induce AIFM1-mediated apoptosis. Functionally, this cleavage form irreversibly binds to DNA breaks and interferes with DNA repair, promoting DNA damage-induced apoptosis. The protein is Poly [ADP-ribose] polymerase 1 of Homo sapiens (Human).